A 207-amino-acid polypeptide reads, in one-letter code: Outer-membrane lipoprotein LolB (207 aa).

A signal peptide spans 1 to 21 (MPIRKVSLLRLIPLASLVLAA). Cys22 carries N-palmitoyl cysteine lipidation. Cys22 carries S-diacylglycerol cysteine lipidation.

The protein belongs to the LolB family. As to quaternary structure, monomer.

It is found in the cell outer membrane. Its function is as follows. Plays a critical role in the incorporation of lipoproteins in the outer membrane after they are released by the LolA protein. The chain is Outer-membrane lipoprotein LolB from Serratia proteamaculans (strain 568).